Consider the following 493-residue polypeptide: Hexokinase-like 1 protein (493 aa).

A Hexokinase domain is found at 38 to 488 (ASTCPILTKF…SGLGAALLAA (451 aa)). The segment at 93-232 (SGNEEGLFYA…GLDMRVSALV (140 aa)) is hexokinase small subdomain. ADP is bound by residues G107, T108, and N109. Residues T198, K199, N233, and D234 each contribute to the D-glucose site. The interval 233 to 477 (NDGVGTLAGA…SHVAIKHTKD (245 aa)) is hexokinase large subdomain. T257 lines the ADP pocket. The D-glucose site is built by N260, E287, and E317. Residue A442 coordinates ADP.

The protein belongs to the hexokinase family.

The enzyme catalyses a D-hexose + ATP = a D-hexose 6-phosphate + ADP + H(+). The catalysed reaction is D-fructose + ATP = D-fructose 6-phosphate + ADP + H(+). It carries out the reaction D-glucose + ATP = D-glucose 6-phosphate + ADP + H(+). The protein operates within carbohydrate metabolism; hexose metabolism. It participates in carbohydrate degradation; glycolysis; D-glyceraldehyde 3-phosphate and glycerone phosphate from D-glucose: step 1/4. Fructose and glucose phosphorylating enzyme. The sequence is that of Hexokinase-like 1 protein from Arabidopsis thaliana (Mouse-ear cress).